The primary structure comprises 154 residues: Putative pre-16S rRNA nuclease (154 aa).

Belongs to the YqgF nuclease family.

Its subcellular location is the cytoplasm. Its function is as follows. Could be a nuclease involved in processing of the 5'-end of pre-16S rRNA. This is Putative pre-16S rRNA nuclease from Rickettsia africae (strain ESF-5).